The following is a 330-amino-acid chain: Aspartate--ammonia ligase (330 aa).

The protein belongs to the class-II aminoacyl-tRNA synthetase family. AsnA subfamily.

It localises to the cytoplasm. It catalyses the reaction L-aspartate + NH4(+) + ATP = L-asparagine + AMP + diphosphate + H(+). Its pathway is amino-acid biosynthesis; L-asparagine biosynthesis; L-asparagine from L-aspartate (ammonia route): step 1/1. The protein is Aspartate--ammonia ligase of Streptococcus pneumoniae serotype 2 (strain D39 / NCTC 7466).